The sequence spans 852 residues: Disease resistance RPP13-like protein 4 (852 aa).

Residues 17 to 68 (LEEKGRTVSDYRKQLEDLQSELKYMQSFLKDAERQKRTNETLRTLVADLREL) adopt a coiled-coil conformation. ADP-binding positions include R149, V161, 189–196 (GMGGLGKT), R297, and K363. Positions 164–410 (EGDKRKIKEW…MSSLQLSYDE (247 aa)) constitute an NB-ARC domain. 6 LRR repeats span residues 558 to 581 (CKYLRVLDISKSIFDAPLSEILDE), 585 to 609 (LQHLACLSLSNTHPLIQFPRSMEDL), 633 to 657 (FKKLLVLDMTNCGSLECFPKGIGSL), 683 to 706 (LTNLRKLGLSLTRGDQIEEEELDS), 763 to 786 (LPMLRYMSICSGNLVKMQEPFWGN), and 798 to 824 (LSSLSDLDMDWEVLQQSMPYLRTVTAN).

Belongs to the disease resistance NB-LRR family. RPP13 subfamily. In terms of assembly, interacts with ZED1/ZRK5. Component of a stable high-order oligomeric complex made of RKS1 and RPP13L4/ZAR1 which recruits ZED1-related kinases (e.g. uridylylated PBL2 and acetylated ZED1/ZRK5) in the presence of ATP and pathogenic bacteria type III secreted effector (T3SE) proteins (e.g. Pseudomonas syringae HopZ1a and HopF2a and Xanthomonas campestris pv. campestris (Xcc) XopAC/AvrAC) to form a wheel-like pentameric resistosome; this complex triggers immunity toward pathogenic bacteria (e.g. X.campestris and P.syringae), especially in vascular tissues. Interacts with RKS1, ZED1/ZRK5, ZRK3, ZRK6 and ZRK15.

Its subcellular location is the cell membrane. The protein resides in the nucleus. Exhibits autoinhibition activity. In terms of biological role, CC-NB-LRR receptor-like protein required for recognition of pathogenic bacteria type III effectors (T3E) such as Pseudomonas syringae HopZ1a and HopF2a and Xanthomonas campestris pv. campestris (Xcc) XopAC/AvrAC; this recognition requires ZED1-related kinases (e.g. PBL2, ZRK3 and ZED1/ZRK5). Confers allele-specific recognition and virulence attenuation of HopZ1a. Immunity mediated by RPP13L4/ZAR1 is independent of several genes required by other resistance protein signaling pathways such as NDR1 and RAR1. Together with ZED1/ZRK5, involved in the regulation of the ambient temperature-sensitive intersection of growth and immune response in the absence of pathogens. The polypeptide is Disease resistance RPP13-like protein 4 (RPP13L4) (Arabidopsis thaliana (Mouse-ear cress)).